Consider the following 2997-residue polypeptide: Chromodomain-helicase-DNA-binding protein 7 (2997 aa).

Residues 86 to 144 (PNRMMSNTPGNGLASPHSQYHTPPVPQVPHGGSGGGQMGVYPGMQNERHGQSFVDSSSM) are disordered. Residues 88–106 (RMMSNTPGNGLASPHSQYH) are compositionally biased toward polar residues. Omega-N-methylarginine is present on Arg-148. Disordered stretches follow at residues 160–186 (YQQQ…PQHM), 199–287 (SMQQ…AVRP), 375–419 (QMNT…GSAG), 498–816 (GQQH…KQKE), and 938–959 (REPE…SESS). Pro residues predominate over residues 166–177 (QPQPPQPAPSGP). Polar residues-rich tracts occupy residues 199–224 (SMQQ…NQGN) and 238–255 (VPQQ…SVQQ). Arg-286 is modified (asymmetric dimethylarginine). Positions 375–390 (QMNTQTMHPSQPQGTY) are enriched in polar residues. Low complexity predominate over residues 498–510 (GQQHPGQQPSFQQ). Residues 607–620 (VAEDPSKGFGKDDF) are compositionally biased toward basic and acidic residues. Polar residues predominate over residues 627-636 (QELNRNSLDG). Position 637 is a phosphoserine (Ser-637). Basic and acidic residues-rich tracts occupy residues 650–682 (KKDP…EPKE) and 717–729 (GKTE…DLDK). Residue Ser-725 is modified to Phosphoserine. Residues 746 to 758 (QKRRSSRQVKRKR) show a composition bias toward basic residues. Over residues 759 to 769 (YTEDLEFKISD) the composition is skewed to basic and acidic residues. Residues 782 to 794 (SPSNTSQSEQQES) show a composition bias toward polar residues. Chromo domains follow at residues 800–867 (PVVE…GQNK) and 882–947 (VEVD…RVER). In terms of domain architecture, Helicase ATP-binding spans 980 to 1154 (LFNWYNMRNC…FSLLHFLEPS (175 aa)). 993 to 1000 (DEMGLGKT) is a binding site for ATP. Positions 1105–1108 (DEAH) match the DEAH box motif. In terms of domain architecture, Helicase C-terminal spans 1294 to 1464 (LIDKLLPKLK…LSKKEIEDLL (171 aa)). 2 disordered regions span residues 1576–1600 (FSDL…KSQG) and 1837–1863 (DMLA…TRTP). Ser-1577 and Ser-1581 each carry phosphoserine. Over residues 1584-1596 (EEKPCAKPRRPQD) the composition is skewed to basic and acidic residues. A compositionally biased stretch (acidic residues) spans 1844-1855 (DGGEFDREDEDP). Residue Ser-1874 is modified to Phosphoserine. Basic and acidic residues-rich tracts occupy residues 2170 to 2189 (QAEG…KCEG) and 2198 to 2207 (GSGKESKQEC). Residues 2170–2290 (QAEGKVEEPE…DETRDGFYME (121 aa)) are disordered. Phosphoserine occurs at positions 2231, 2233, 2237, 2251, 2272, 2275, 2356, and 2395. A compositionally biased stretch (acidic residues) spans 2237 to 2251 (SEEDEEEKLEDDDKS). Positions 2401-2431 (RRRRRKIEIEAERAAKRRNLMEMVAQLRESQ) form a coiled coil. Thr-2472 bears the Phosphothreonine mark. Ser-2533 and Ser-2535 each carry phosphoserine. Position 2551 is a phosphothreonine (Thr-2551). Phosphoserine is present on residues Ser-2559 and Ser-2619. Residues 2823 to 2832 (ATGNTTTASS) are compositionally biased toward low complexity. Disordered stretches follow at residues 2823–2872 (ATGN…SANG) and 2935–2997 (EEKA…ENDE). Composition is skewed to basic and acidic residues over residues 2839 to 2849 (STSKGEEKGNE) and 2935 to 2951 (EEKA…KDGE). 2 positions are modified to phosphoserine: Ser-2956 and Ser-2961. A compositionally biased stretch (acidic residues) spans 2970–2997 (LLEDEIAQGEELDSLDGGDEIENNENDE).

This sequence belongs to the SNF2/RAD54 helicase family. May interact with CTCF. Interacts with CHD8. Interacts with FAM124B. Found in a complex composed of AGO2, CHD7 and ARB2A. Interacts with TLK2. Widely expressed in fetal and adult tissues.

It localises to the nucleus. The protein resides in the nucleolus. The enzyme catalyses ATP + H2O = ADP + phosphate + H(+). ATP-dependent chromatin-remodeling factor, slides nucleosomes along DNA; nucleosome sliding requires ATP. Probable transcription regulator. May be involved in the in 45S precursor rRNA production. This chain is Chromodomain-helicase-DNA-binding protein 7 (CHD7), found in Homo sapiens (Human).